The primary structure comprises 92 residues: Large ribosomal subunit protein eL43 (92 aa).

A C4-type zinc finger spans residues 39–60 (CSFCGKKTVRRGAAGIWSCHSC).

This sequence belongs to the eukaryotic ribosomal protein eL43 family.

The chain is Large ribosomal subunit protein eL43 (RPL43) from Candida glabrata (strain ATCC 2001 / BCRC 20586 / JCM 3761 / NBRC 0622 / NRRL Y-65 / CBS 138) (Yeast).